A 456-amino-acid polypeptide reads, in one-letter code: N(6)-adenosine-methyltransferase non-catalytic subunit METTL14 (456 aa).

Basic and acidic residues predominate over residues 39 to 51; sequence DEQREIAETRETS. Positions 39–74 are disordered; sequence DEQREIAETRETSRASYDTSATVSKRKMPEEGEADE. The span at 52 to 61 shows a compositional bias: polar residues; sequence RASYDTSATV. 2 interaction with METTL3 regions span residues 135-136 and 237-238; these read RD and SG. A positively charged region required for RNA-binding region spans residues 245-254; that stretch reads RMCLRKWGFR. 2 interaction with METTL3 regions span residues 255–258 and 278–287; these read RSED and KAIFQRTKEH. The tract at residues 297–298 is positively charged region required for RNA-binding; the sequence is HR. The tract at residues 308–312 is interaction with METTL3; sequence NVDID. The tract at residues 395-456 is disordered; that stretch reads LRPKTPPPKS…GPHRGVFAPR (62 aa). Positions 410–421 are enriched in gly residues; the sequence is ASRGGGRGGPSA. The segment covering 423-441 has biased composition (basic and acidic residues); that stretch reads RGERGRERNRGSFRGDRGN.

This sequence belongs to the MT-A70-like family. As to quaternary structure, heterodimer; heterodimerizes with mettl3 to form an antiparallel heterodimer that constitutes an active methyltransferase. Component of the WMM complex, a N6-methyltransferase complex composed of a catalytic subcomplex, named MAC, and of an associated subcomplex, named MACOM. The MAC subcomplex is composed of mettl3 and mettl14.

Its subcellular location is the nucleus. Its function is as follows. The METTL3-METTL14 heterodimer forms a N6-methyltransferase complex that methylates adenosine residues at the N(6) position of some mRNAs and regulates the circadian clock, differentiation of embryonic stem cells and cortical neurogenesis. In the heterodimer formed with mettl3, mettl14 constitutes the RNA-binding scaffold that recognizes the substrate rather than the catalytic core. N6-methyladenosine (m6A), which takes place at the 5'-[AG]GAC-3' consensus sites of some mRNAs, plays a role in mRNA stability and processing. This Xenopus tropicalis (Western clawed frog) protein is N(6)-adenosine-methyltransferase non-catalytic subunit METTL14 (mettl14).